The chain runs to 40 residues: Photosystem II reaction center protein J (40 aa).

Residues 8-28 form a helical membrane-spanning segment; sequence IPLWIIGTVAGILVIGLVGVF.

It belongs to the PsbJ family. In terms of assembly, PSII is composed of 1 copy each of membrane proteins PsbA, PsbB, PsbC, PsbD, PsbE, PsbF, PsbH, PsbI, PsbJ, PsbK, PsbL, PsbM, PsbT, PsbX, PsbY, PsbZ, Psb30/Ycf12, at least 3 peripheral proteins of the oxygen-evolving complex and a large number of cofactors. It forms dimeric complexes.

It localises to the plastid. The protein localises to the chloroplast thylakoid membrane. Its function is as follows. One of the components of the core complex of photosystem II (PSII). PSII is a light-driven water:plastoquinone oxidoreductase that uses light energy to abstract electrons from H(2)O, generating O(2) and a proton gradient subsequently used for ATP formation. It consists of a core antenna complex that captures photons, and an electron transfer chain that converts photonic excitation into a charge separation. This Helianthus annuus (Common sunflower) protein is Photosystem II reaction center protein J.